A 346-amino-acid chain; its full sequence is MAAGLDRDKALDNALAQIDKAFGKGSVMRLGDDTRPPIQAIPTGSIALDVALGIGGLPKGRVIEIYGPESSGKTTVALHAVANAQAAGGIAAFIDAEHALDPEYAGKLGVDIDNLLVSQPDTGEQALEIADMLVRSGALDIIVIDSVAALVPRAEIEGEMGDSHVGLQARLMSQALRKMTAALANSGTTAIFINQLREKIGVMFGSPETTTGGKALKFYASVRLDVRRIETLKDGTEAVGNRTRVKVVKNKVAPPFRTAEFDIVYGGGISREGSLIDMGVEHGIIRKSGAWYTYDGDQLGQGKENARSFLRDNPDLANEIEKKIKEKLGILPSVESDAVAPVPIDL.

67–74 provides a ligand contact to ATP; it reads GPESSGKT.

The protein belongs to the RecA family.

The protein resides in the cytoplasm. Its function is as follows. Can catalyze the hydrolysis of ATP in the presence of single-stranded DNA, the ATP-dependent uptake of single-stranded DNA by duplex DNA, and the ATP-dependent hybridization of homologous single-stranded DNAs. It interacts with LexA causing its activation and leading to its autocatalytic cleavage. This chain is Protein RecA, found in Frankia alni (strain DSM 45986 / CECT 9034 / ACN14a).